A 242-amino-acid chain; its full sequence is Polycomb group RING finger protein 3 (242 aa).

The RING-type zinc finger occupies 17–56 (CRLCNGYLIDATTVTECLHTFCRSCLVKYLEENNTCPTCR). The interval 120–149 (EAHRNGETKTDEHTHKEPPEEKQEEDHDYH) is disordered.

Component of a PRC1-like complex.

The protein resides in the nucleus. Functionally, component of a Polycomb group (PcG) multiprotein PRC1-like complex, a complex class required to maintain the transcriptionally repressive state of many genes, including Hox genes, throughout development. PcG PRC1 complex acts via chromatin remodeling and modification of histones; it mediates monoubiquitination of histone H2A 'Lys-119', rendering chromatin heritably changed in its expressibility. Within the PRC1-like complex, regulates RNF2 ubiquitin ligase activity. The polypeptide is Polycomb group RING finger protein 3 (pcgf3) (Xenopus tropicalis (Western clawed frog)).